The sequence spans 209 residues: Pyroglutamyl-peptidase 1 (209 aa).

Active-site residues include glutamate 85, cysteine 149, and histidine 168.

It belongs to the peptidase C15 family. Monomer.

The protein localises to the cytoplasm. The enzyme catalyses Release of an N-terminal pyroglutamyl group from a polypeptide, the second amino acid generally not being Pro.. Functionally, removes 5-oxoproline from various penultimate amino acid residues except L-proline. This Rattus norvegicus (Rat) protein is Pyroglutamyl-peptidase 1 (Pgpep1).